A 228-amino-acid polypeptide reads, in one-letter code: 7-cyano-7-deazaguanine synthase (228 aa).

9–19 (LSGGPDSTTVL) contributes to the ATP binding site. Zn(2+) contacts are provided by Cys-193, Cys-203, Cys-206, and Cys-209.

The protein belongs to the QueC family. Zn(2+) is required as a cofactor.

The enzyme catalyses 7-carboxy-7-deazaguanine + NH4(+) + ATP = 7-cyano-7-deazaguanine + ADP + phosphate + H2O + H(+). It participates in purine metabolism; 7-cyano-7-deazaguanine biosynthesis. Catalyzes the ATP-dependent conversion of 7-carboxy-7-deazaguanine (CDG) to 7-cyano-7-deazaguanine (preQ(0)). This Rickettsia rickettsii (strain Iowa) protein is 7-cyano-7-deazaguanine synthase.